The sequence spans 345 residues: Anthranilate phosphoribosyltransferase (345 aa).

Residues Gly84, Gly87–Asp88, Thr92, Asn94–Thr97, Lys112–Ser120, and Ser124 each bind 5-phospho-alpha-D-ribose 1-diphosphate. Gly84 is an anthranilate binding site. Ser96 contributes to the Mg(2+) binding site. An anthranilate-binding site is contributed by Arg170. Mg(2+) is bound by residues Asp229 and Glu230.

The protein belongs to the anthranilate phosphoribosyltransferase family. In terms of assembly, homodimer. Requires Mg(2+) as cofactor.

It carries out the reaction N-(5-phospho-beta-D-ribosyl)anthranilate + diphosphate = 5-phospho-alpha-D-ribose 1-diphosphate + anthranilate. Its pathway is amino-acid biosynthesis; L-tryptophan biosynthesis; L-tryptophan from chorismate: step 2/5. Its function is as follows. Catalyzes the transfer of the phosphoribosyl group of 5-phosphorylribose-1-pyrophosphate (PRPP) to anthranilate to yield N-(5'-phosphoribosyl)-anthranilate (PRA). This is Anthranilate phosphoribosyltransferase from Paracidovorax citrulli (strain AAC00-1) (Acidovorax citrulli).